A 182-amino-acid chain; its full sequence is uncharacterized protein (182 aa).

This is an uncharacterized protein from Thermoproteus tenax (TTV1).